Here is a 1390-residue protein sequence, read N- to C-terminus: General transcriptional corepressor trfA (1390 aa).

The interval 53–143 is disordered; sequence QQQQQHQQHQ…QQQQQQQQQQ (91 aa). 10 TPR repeats span residues 171-204, 206-238, 239-272, 275-308, 312-345, 349-382, 384-419, 420-453, 454-487, and 489-521; these read ESIW…NPFS, KALT…ESKN, GEVW…LPNP, PNLW…DNKF, TEIY…PPLP, SDIW…NATH, KVLQ…DSSD, AQTW…DGRN, PTFW…NPFL, and EVWY…DPHN. Disordered stretches follow at residues 539 to 596, 632 to 938, and 958 to 1390; these read PIGK…NSFV, ERGR…YNNI, and LDEE…KLER. Positions 540–557 are enriched in basic and acidic residues; the sequence is IGKDGYDLQNGEHGEHGG. Low complexity predominate over residues 582-593; sequence QNNRNGNNNGNN. Residues 632–641 are compositionally biased toward basic and acidic residues; it reads ERGRGEDMHN. Over residues 644-744 the composition is skewed to low complexity; it reads HSQYSNSMSM…MNDNVNSKNN (101 aa). The span at 745 to 803 shows a compositional bias: basic and acidic residues; that stretch reads DVLDRRYKGILEREKTSPNGDGRDNRDNIRDNRDNRDSRDGRDNRDGRDSRDRIQEYTR. The segment covering 805-846 has biased composition (low complexity); that stretch reads YNNNNNNNNSISSINNNNNNNNNNYNNNNNNNNNNNNNNNNN. The segment covering 857-871 has biased composition (basic and acidic residues); it reads HNDRRSYERDNKERI. Low complexity-rich tracts occupy residues 872-898 and 917-937; these read NNNN…NNNN and NNSN…NYNN. Basic and acidic residues-rich tracts occupy residues 977–993, 1000–1029, 1037–1099, and 1120–1135; these read KEAE…KERS, EKPD…EKES, KEIE…EKES, and TKKD…EKKL. Residues 1136 to 1146 are compositionally biased toward polar residues; it reads SSVSPTTTAVE. Over residues 1147–1169 the composition is skewed to basic and acidic residues; that stretch reads QSRDETKELEMDTKEDSEKEKKS. Composition is skewed to low complexity over residues 1170-1180 and 1192-1203; these read STTTTAAASES and TTTTTTTTNTTT. A compositionally biased stretch (basic and acidic residues) spans 1206–1218; it reads PTHKDKESSKNDD. Over residues 1219-1228 the composition is skewed to low complexity; sequence TTTTTTTTTT. A compositionally biased stretch (polar residues) spans 1229-1239; sequence KSAKSPNSSPT. The segment covering 1240-1263 has biased composition (basic and acidic residues); the sequence is RSDEVVEPHQDASQEEINKRKLED. 2 stretches are compositionally biased toward low complexity: residues 1277–1289 and 1315–1337; these read STPS…STPS and SSSS…TNSS. Basic and acidic residues predominate over residues 1339-1374; that stretch reads KNERDRDRERERERERDREREREREREREREREKNK.

This sequence belongs to the CYC8/SSN6 family. In terms of assembly, associates with tupA to form the trfA-tupA corepressor complex.

It is found in the nucleus. Acts as a component of the trfA-tupA corepressor complex which is involved in the repression of many genes in a wide variety of physiological processes. May also be involved in the derepression of at least some target genes. The complex is recruited to target genes by interaction with DNA-bound transcriptional repressors. The complex recruits histone deacetylases to produce a repressive chromatin structure, interacts with hypoacetylated N-terminal tails of histones H3 and H4 that have been programmed for repression by the action of histone deacetylases and interferes directly with the transcriptional machinery by associating with the RNA polymerase II mediator complex. Required for normal growth and for aggregation in early development. Required for a proper chemotactic response to cAMP. In Dictyostelium discoideum (Social amoeba), this protein is General transcriptional corepressor trfA (trfA).